The sequence spans 61 residues: Large ribosomal subunit protein uL30 (61 aa).

This sequence belongs to the universal ribosomal protein uL30 family. As to quaternary structure, part of the 50S ribosomal subunit.

In Corynebacterium aurimucosum (strain ATCC 700975 / DSM 44827 / CIP 107346 / CN-1) (Corynebacterium nigricans), this protein is Large ribosomal subunit protein uL30.